Consider the following 367-residue polypeptide: uncharacterized protein (367 aa).

This is an uncharacterized protein from Arabidopsis thaliana (Mouse-ear cress).